The sequence spans 1411 residues: DNA-directed RNA polymerase subunit beta' (1411 aa).

Residues C69, C71, C84, and C87 each contribute to the Zn(2+) site. Mg(2+) is bound by residues D461, D463, and D465. Positions 809, 883, 890, and 893 each coordinate Zn(2+).

Belongs to the RNA polymerase beta' chain family. As to quaternary structure, the RNAP catalytic core consists of 2 alpha, 1 beta, 1 beta' and 1 omega subunit. When a sigma factor is associated with the core the holoenzyme is formed, which can initiate transcription. Requires Mg(2+) as cofactor. It depends on Zn(2+) as a cofactor.

The catalysed reaction is RNA(n) + a ribonucleoside 5'-triphosphate = RNA(n+1) + diphosphate. DNA-dependent RNA polymerase catalyzes the transcription of DNA into RNA using the four ribonucleoside triphosphates as substrates. This is DNA-directed RNA polymerase subunit beta' from Ehrlichia ruminantium (strain Welgevonden).